The primary structure comprises 89 residues: uncharacterized protein (89 aa).

2 stretches are compositionally biased toward basic residues: residues 1–17 and 65–89; these read MPPH…HGHH and HHGH…HGHH. Disordered stretches follow at residues 1 to 25 and 60 to 89; these read MPPH…ITPV and LETG…HGHH.

This is an uncharacterized protein from Dictyostelium discoideum (Social amoeba).